The sequence spans 309 residues: Taste receptor type 2 member 66 (309 aa).

Methionine 1 is a topological domain (extracellular). Residues 2-22 traverse the membrane as a helical segment; sequence ITFLPIIFSILIVVTFVIGNF. The Cytoplasmic segment spans residues 23–46; that stretch reads ANGFIALANSIEWFKRQKISFADQ. Residues 47–67 form a helical membrane-spanning segment; that stretch reads ILTALAVPRVGLLWVLLLNWY. The Extracellular segment spans residues 68–86; that stretch reads ATELNPAFYSIEVRITAYN. A helical membrane pass occupies residues 87–107; the sequence is LWAVINHFSNWLATSLSIFYL. The Cytoplasmic portion of the chain corresponds to 108-126; it reads LKIANFSNLIFLRLKRRVK. A helical transmembrane segment spans residues 127-147; that stretch reads SVVLVILLGPLLFLVCHLFVI. The Extracellular portion of the chain corresponds to 148 to 178; that stretch reads NMNQIIWTKEYEGNMTWKIKLRSAMYLSNTT. Residues asparagine 161 and asparagine 176 are each glycosylated (N-linked (GlcNAc...) asparagine). Residues 179 to 199 form a helical membrane-spanning segment; it reads VTILANLVPFTVTLISFLLLV. At 200–229 the chain is on the cytoplasmic side; it reads CSLCKHLKKMQLHGKGSQDPSTKVHIKALQ. The helical transmembrane segment at 230 to 250 threads the bilayer; the sequence is TVISFLLLCAIYFVSVIISVW. Topologically, residues 251–259 are extracellular; the sequence is SFKNLENKP. A helical membrane pass occupies residues 260-280; sequence VFMFCQAIGFSCSSAHPFILI. The Cytoplasmic portion of the chain corresponds to 281–309; it reads WGNKKLKQPFLSVLWQMRYWVKGEKPSSS.

This sequence belongs to the G-protein coupled receptor T2R family.

Its subcellular location is the membrane. Functionally, receptor that may play a role in the perception of bitterness and is gustducin-linked. May play a role in sensing the chemical composition of the gastrointestinal content. The activity of this receptor may stimulate alpha gustducin, mediate PLC-beta-2 activation and lead to the gating of TRPM5. This chain is Taste receptor type 2 member 66 (TAS2R66), found in Pan paniscus (Pygmy chimpanzee).